The following is a 599-amino-acid chain: MTDLNRIRNFSIVAHIDHGKSTLADRLIQLTGTVAARDMQAQLLDQMDIERERGITIKANTVRIEYPAKDGHTYILNLIDTPGHVDFAYEVSRSMQAVEGSLLVVDASQGVEAQTLANVYQAIDADHEIVPVLNKVDLPAAEPDRVREQIEDVIGIDASEAVEISAKTGIGIPDVLEAIVTRLPAPKGDRDAPLKAMLVDSYYDSYLGVVVLIRVIDGVIKKGDKIKMMRTGGQYPVDRLGVFTPKMKDIGELGPGEMGFLTASIKQVRDTRVGDTITHDKHGAEQPLAGFKPSQPVVFCGLFPVDTNQFEDLRDAIEKLALNDASFSHEMETSAALGFGFRCGFLGLLHLEVIRDRLEREYDIDLITTAPSVIYHVHMRDETMVDLHNPADMPDPAAIDRIEEPRIKATILVPDDYLGDVLKLCQDRRGIQIDLTYAGTRAMVVYDLPLNEVVFDFYDRLKSVTKGYASFDYQMIGYREDALVKMQVLVNDEPVDALSIMVHRDRAETRGRAMVEKLKDLIPRHMFKIPIQAAIGGRVIARETLSAMRKDVTAKCYGGDASRKRKLLDKQKAGKKKMRQFGKVEIPQSAFISALKMDG.

The tr-type G domain occupies 5 to 187 (NRIRNFSIVA…AIVTRLPAPK (183 aa)). Residues 17-22 (DHGKST) and 134-137 (NKVD) each bind GTP.

The protein belongs to the TRAFAC class translation factor GTPase superfamily. Classic translation factor GTPase family. LepA subfamily.

It localises to the cell inner membrane. The catalysed reaction is GTP + H2O = GDP + phosphate + H(+). Required for accurate and efficient protein synthesis under certain stress conditions. May act as a fidelity factor of the translation reaction, by catalyzing a one-codon backward translocation of tRNAs on improperly translocated ribosomes. Back-translocation proceeds from a post-translocation (POST) complex to a pre-translocation (PRE) complex, thus giving elongation factor G a second chance to translocate the tRNAs correctly. Binds to ribosomes in a GTP-dependent manner. The sequence is that of Elongation factor 4 from Jannaschia sp. (strain CCS1).